Reading from the N-terminus, the 462-residue chain is Cysteine--tRNA ligase (462 aa).

Cys-27 is a binding site for Zn(2+). The short motif at 29–39 (PTVYNYIHVGN) is the 'HIGH' region element. Positions 209, 234, and 238 each coordinate Zn(2+). The 'KMSKS' region signature appears at 266 to 270 (KMSKS). Residue Lys-269 participates in ATP binding.

This sequence belongs to the class-I aminoacyl-tRNA synthetase family. Monomer. It depends on Zn(2+) as a cofactor.

Its subcellular location is the cytoplasm. The enzyme catalyses tRNA(Cys) + L-cysteine + ATP = L-cysteinyl-tRNA(Cys) + AMP + diphosphate. This is Cysteine--tRNA ligase from Finegoldia magna (strain ATCC 29328 / DSM 20472 / WAL 2508) (Peptostreptococcus magnus).